Reading from the N-terminus, the 264-residue chain is Agamous-like MADS-box protein AGL15 (264 aa).

Residues 3 to 57 (RGKIEIKRIENANSRQVTFSKRRAGLLKKAHELSVLCDAEVAVIVFSKSGKLFEF) form the MADS-box domain. A K-box domain is found at 87-177 (NQEECTEVDL…RRQVQELRSF (91 aa)). Residues 223–264 (LQLGLPGEAHDTRKNEGDRESPSSDSVTTSTTRATAQRISLV) form a disordered region. Residues 230–244 (EAHDTRKNEGDRESP) are compositionally biased toward basic and acidic residues. A compositionally biased stretch (low complexity) spans 245–257 (SSDSVTTSTTRAT).

Its subcellular location is the nucleus. In terms of biological role, probable transcription factor. This is Agamous-like MADS-box protein AGL15 (AGL15) from Brassica napus (Rape).